Consider the following 197-residue polypeptide: Cytochrome c oxidase polypeptide 5, mitochondrial (197 aa).

Residues 1 to 13 (MFLRSVTRAAARS) constitute a mitochondrion transit peptide. The Mitochondrial matrix segment spans residues 14 to 129 (SAVPTTGLRS…KGENLKIFFK (116 aa)). The chain crosses the membrane as a helical span at residues 130–147 (VAQLTLVSFGIFYVIHLF). Residues 148 to 197 (AKPQPKTMTKEWQEASNEYAKQEKINPIYGISAEGYEGKGFVQSPPAEKQ) lie on the Mitochondrial intermembrane side of the membrane.

It belongs to the cytochrome c oxidase IV family. Component of the cytochrome c oxidase (complex IV, CIV), a multisubunit enzyme composed of a catalytic core of 3 subunits and seevral supernumerary subunits. The complex exists as a monomer or a dimer and forms supercomplexes (SCs) in the inner mitochondrial membrane with ubiquinol-cytochrome c oxidoreductase (cytochrome b-c1 complex, complex III, CIII).

The protein localises to the mitochondrion inner membrane. It functions in the pathway energy metabolism; oxidative phosphorylation. Component of the cytochrome c oxidase, the last enzyme in the mitochondrial electron transport chain which drives oxidative phosphorylation. The respiratory chain contains 3 multisubunit complexes succinate dehydrogenase (complex II, CII), ubiquinol-cytochrome c oxidoreductase (cytochrome b-c1 complex, complex III, CIII) and cytochrome c oxidase (complex IV, CIV), that cooperate to transfer electrons derived from NADH and succinate to molecular oxygen, creating an electrochemical gradient over the inner membrane that drives transmembrane transport and the ATP synthase. Cytochrome c oxidase is the component of the respiratory chain that catalyzes the reduction of oxygen to water. Electrons originating from reduced cytochrome c in the intermembrane space (IMS) are transferred via the dinuclear copper A center (CU(A)) of subunit 2 and heme A of subunit 1 to the active site in subunit 1, a binuclear center (BNC) formed by heme A3 and copper B (CU(B)). The BNC reduces molecular oxygen to 2 water molecules using 4 electrons from cytochrome c in the IMS and 4 protons from the mitochondrial matrix. In Aspergillus niger, this protein is Cytochrome c oxidase polypeptide 5, mitochondrial (cox5).